We begin with the raw amino-acid sequence, 505 residues long: MAKAATPKETAAVKKPAAPKKAATAKTTAVVATGAVGRVTQVIGAVVDVAFEEGQLPQILNALETDNKGNRLVLEVAQHLGENAVRTIAMDSTEGLVRGQSVTDTGGPISVPVGKETLGRIMNVIGEPVDEAGPVETSSRRAIHQDAPAYVEQSTEAQILVTGIKVVDLLAPYAKGGKIGLFGGAGVGKTVLIMELINNVAKAHGGYSVFAGVGERTREGNDLYHEMIESGVNKHGGGEGSKAALVYGQMNEPPGARARVALTGLTIAEHFRDEGQDVLFFVDNIFRFTQAGSEVSALLGRIPSAVGYQPTLATDMGQMQERITTTTKGSITSVQAIYVPADDLTDPAPATSFAHLDATTVLSRSIAEKGIYPAVDPLDSTSRMLDPMIVGEEHYEVSRKVQSTLQRYKALQDIIAILGMDELSEEDKVAVARARKIERFLSQPFFVAEVFTGSPGKLVALEDTIKGFKGLVNGEYDHLPEAAFYMVGSIDEAIEKAKKLAAEAA.

Residues 1–25 (MAKAATPKETAAVKKPAAPKKAATA) form a disordered region. Position 183-190 (183-190 (GGAGVGKT)) interacts with ATP.

The protein belongs to the ATPase alpha/beta chains family. F-type ATPases have 2 components, CF(1) - the catalytic core - and CF(0) - the membrane proton channel. CF(1) has five subunits: alpha(3), beta(3), gamma(1), delta(1), epsilon(1). CF(0) has three main subunits: a(1), b(2) and c(9-12). The alpha and beta chains form an alternating ring which encloses part of the gamma chain. CF(1) is attached to CF(0) by a central stalk formed by the gamma and epsilon chains, while a peripheral stalk is formed by the delta and b chains.

The protein localises to the cell inner membrane. It carries out the reaction ATP + H2O + 4 H(+)(in) = ADP + phosphate + 5 H(+)(out). Functionally, produces ATP from ADP in the presence of a proton gradient across the membrane. The catalytic sites are hosted primarily by the beta subunits. In Sinorhizobium fredii (strain NBRC 101917 / NGR234), this protein is ATP synthase subunit beta.